A 671-amino-acid polypeptide reads, in one-letter code: DNA ligase (671 aa).

NAD(+) is bound by residues 32–36 (DAEYD), 81–82 (SL), and Glu-113. Catalysis depends on Lys-115, which acts as the N6-AMP-lysine intermediate. The NAD(+) site is built by Arg-136, Glu-173, Lys-290, and Lys-314. Cys-408, Cys-411, Cys-426, and Cys-432 together coordinate Zn(2+). Positions 593–671 (EIDSPFAGKT…EAEMIRLLGA (79 aa)) constitute a BRCT domain.

This sequence belongs to the NAD-dependent DNA ligase family. LigA subfamily. It depends on Mg(2+) as a cofactor. Requires Mn(2+) as cofactor.

It catalyses the reaction NAD(+) + (deoxyribonucleotide)n-3'-hydroxyl + 5'-phospho-(deoxyribonucleotide)m = (deoxyribonucleotide)n+m + AMP + beta-nicotinamide D-nucleotide.. Its function is as follows. DNA ligase that catalyzes the formation of phosphodiester linkages between 5'-phosphoryl and 3'-hydroxyl groups in double-stranded DNA using NAD as a coenzyme and as the energy source for the reaction. It is essential for DNA replication and repair of damaged DNA. The protein is DNA ligase of Salmonella choleraesuis (strain SC-B67).